The primary structure comprises 481 residues: Coniferyl aldehyde dehydrogenase (481 aa).

Residues Glu-221 and Cys-255 contribute to the active site.

It belongs to the aldehyde dehydrogenase family. In terms of assembly, homodimer.

The enzyme catalyses (E)-coniferaldehyde + NADP(+) + H2O = (E)-ferulate + NADPH + 2 H(+). It carries out the reaction (E)-coniferaldehyde + NAD(+) + H2O = (E)-ferulate + NADH + 2 H(+). Catalyzes the NAD(+)-dependent oxidation of coniferyl aldehyde to ferulic acid and which is induced during growth with eugenol as the carbon source. The protein is Coniferyl aldehyde dehydrogenase (calB) of Pseudomonas sp. (strain HR199 / DSM 7063).